A 244-amino-acid chain; its full sequence is Phosphoadenosine 5'-phosphosulfate reductase (244 aa).

C239 (nucleophile; cysteine thiosulfonate intermediate) is an active-site residue.

Belongs to the PAPS reductase family. CysH subfamily.

The protein resides in the cytoplasm. It catalyses the reaction [thioredoxin]-disulfide + sulfite + adenosine 3',5'-bisphosphate + 2 H(+) = [thioredoxin]-dithiol + 3'-phosphoadenylyl sulfate. The protein operates within sulfur metabolism; hydrogen sulfide biosynthesis; sulfite from sulfate: step 3/3. Functionally, catalyzes the formation of sulfite from phosphoadenosine 5'-phosphosulfate (PAPS) using thioredoxin as an electron donor. The sequence is that of Phosphoadenosine 5'-phosphosulfate reductase from Salmonella newport (strain SL254).